We begin with the raw amino-acid sequence, 507 residues long: Histidine ammonia-lyase (507 aa).

A cross-link (5-imidazolinone (Ala-Gly)) is located at residues 142-144 (ASG). The residue at position 143 (serine 143) is a 2,3-didehydroalanine (Ser).

This sequence belongs to the PAL/histidase family. In terms of processing, contains an active site 4-methylidene-imidazol-5-one (MIO), which is formed autocatalytically by cyclization and dehydration of residues Ala-Ser-Gly.

The protein localises to the cytoplasm. It catalyses the reaction L-histidine = trans-urocanate + NH4(+). Its pathway is amino-acid degradation; L-histidine degradation into L-glutamate; N-formimidoyl-L-glutamate from L-histidine: step 1/3. This Symbiobacterium thermophilum (strain DSM 24528 / JCM 14929 / IAM 14863 / T) protein is Histidine ammonia-lyase.